We begin with the raw amino-acid sequence, 352 residues long: Protein-glutamate methylesterase/protein-glutamine glutaminase 2 (352 aa).

Residues 1–116 enclose the Response regulatory domain; the sequence is MIVDDSAIVR…KDFIQDAASD (116 aa). The residue at position 50 (Asp-50) is a 4-aspartylphosphate. A CheB-type methylesterase domain is found at 159–351; sequence SKTTEHVVAI…QEIMRYAHLK (193 aa). Catalysis depends on residues Ser-171, His-197, and Asp-293.

Belongs to the CheB family. In terms of processing, phosphorylated by CheA. Phosphorylation of the N-terminal regulatory domain activates the methylesterase activity.

The protein resides in the cytoplasm. It catalyses the reaction [protein]-L-glutamate 5-O-methyl ester + H2O = L-glutamyl-[protein] + methanol + H(+). The enzyme catalyses L-glutaminyl-[protein] + H2O = L-glutamyl-[protein] + NH4(+). Its function is as follows. Involved in chemotaxis. Part of a chemotaxis signal transduction system that modulates chemotaxis in response to various stimuli. Catalyzes the demethylation of specific methylglutamate residues introduced into the chemoreceptors (methyl-accepting chemotaxis proteins or MCP) by CheR. Also mediates the irreversible deamidation of specific glutamine residues to glutamic acid. In Shewanella denitrificans (strain OS217 / ATCC BAA-1090 / DSM 15013), this protein is Protein-glutamate methylesterase/protein-glutamine glutaminase 2.